We begin with the raw amino-acid sequence, 156 residues long: Small ribosomal subunit protein uS7 (156 aa).

Belongs to the universal ribosomal protein uS7 family. Part of the 30S ribosomal subunit. Contacts proteins S9 and S11.

Functionally, one of the primary rRNA binding proteins, it binds directly to 16S rRNA where it nucleates assembly of the head domain of the 30S subunit. Is located at the subunit interface close to the decoding center, probably blocks exit of the E-site tRNA. The sequence is that of Small ribosomal subunit protein uS7 from Brucella melitensis biotype 1 (strain ATCC 23456 / CCUG 17765 / NCTC 10094 / 16M).